The following is a 122-amino-acid chain: Large ribosomal subunit protein uL14 (122 aa).

The protein belongs to the universal ribosomal protein uL14 family. Part of the 50S ribosomal subunit. Forms a cluster with proteins L3 and L19. In the 70S ribosome, L14 and L19 interact and together make contacts with the 16S rRNA in bridges B5 and B8.

Binds to 23S rRNA. Forms part of two intersubunit bridges in the 70S ribosome. The chain is Large ribosomal subunit protein uL14 from Bifidobacterium longum (strain DJO10A).